A 453-amino-acid polypeptide reads, in one-letter code: Aldehyde dehydrogenase, dimeric NADP-preferring (453 aa).

The residue at position 2 (serine 2) is an N-acetylserine. Lysine 178 carries the post-translational modification N6-acetyllysine. Position 188-193 (glycine 188–glycine 193) interacts with NAD(+). Position 194 is an N6-acetyllysine (lysine 194). Active-site residues include glutamate 210 and cysteine 244.

This sequence belongs to the aldehyde dehydrogenase family. In terms of assembly, homodimer. High levels in stomach, esophagus and lung; low level in the liver and kidney.

Its subcellular location is the cytoplasm. The enzyme catalyses an aldehyde + NAD(+) + H2O = a carboxylate + NADH + 2 H(+). It catalyses the reaction octanal + NAD(+) + H2O = octanoate + NADH + 2 H(+). ALDHs play a major role in the detoxification of alcohol-derived acetaldehyde. They are involved in the metabolism of corticosteroids, biogenic amines, neurotransmitters, and lipid peroxidation. Oxidizes medium and long chain aldehydes into non-toxic fatty acids. Preferentially oxidizes aromatic aldehyde substrates. Comprises about 50 percent of corneal epithelial soluble proteins. May play a role in preventing corneal damage caused by ultraviolet light. This Homo sapiens (Human) protein is Aldehyde dehydrogenase, dimeric NADP-preferring (ALDH3A1).